Consider the following 188-residue polypeptide: Putative manganese efflux pump MntP (188 aa).

Transmembrane regions (helical) follow at residues 3–23 (FYALLLIALGMSMDAFAVALA), 35–55 (IAATALVFGTVEALTPLAGWV), 63–83 (FISEWDHWVAFVLLGGLGLKM), 104–126 (WMTVLTAFGTSIDSMIVGVGLAF), 140–160 (MATTVMVAVGLTAGRALGVLF), and 167–187 (AGGLVLIAIGTWTLLSHLGLI).

This sequence belongs to the MntP (TC 9.B.29) family.

It is found in the cell inner membrane. Its function is as follows. Probably functions as a manganese efflux pump. In Neisseria meningitidis serogroup B (strain ATCC BAA-335 / MC58), this protein is Putative manganese efflux pump MntP.